The sequence spans 376 residues: Succinyl-diaminopimelate desuccinylase (376 aa).

Residue H67 coordinates Zn(2+). D69 is an active-site residue. Residue D100 participates in Zn(2+) binding. E134 (proton acceptor) is an active-site residue. Residues E135, E163, and H349 each coordinate Zn(2+).

This sequence belongs to the peptidase M20A family. DapE subfamily. Homodimer. It depends on Zn(2+) as a cofactor. Requires Co(2+) as cofactor.

It catalyses the reaction N-succinyl-(2S,6S)-2,6-diaminopimelate + H2O = (2S,6S)-2,6-diaminopimelate + succinate. It participates in amino-acid biosynthesis; L-lysine biosynthesis via DAP pathway; LL-2,6-diaminopimelate from (S)-tetrahydrodipicolinate (succinylase route): step 3/3. Functionally, catalyzes the hydrolysis of N-succinyl-L,L-diaminopimelic acid (SDAP), forming succinate and LL-2,6-diaminopimelate (DAP), an intermediate involved in the bacterial biosynthesis of lysine and meso-diaminopimelic acid, an essential component of bacterial cell walls. This is Succinyl-diaminopimelate desuccinylase from Actinobacillus succinogenes (strain ATCC 55618 / DSM 22257 / CCUG 43843 / 130Z).